We begin with the raw amino-acid sequence, 182 residues long: Hypoxanthine/guanine phosphoribosyltransferase (182 aa).

The protein belongs to the purine/pyrimidine phosphoribosyltransferase family. Archaeal HPRT subfamily. As to quaternary structure, homodimer.

Its subcellular location is the cytoplasm. It carries out the reaction IMP + diphosphate = hypoxanthine + 5-phospho-alpha-D-ribose 1-diphosphate. The catalysed reaction is GMP + diphosphate = guanine + 5-phospho-alpha-D-ribose 1-diphosphate. The protein operates within purine metabolism; IMP biosynthesis via salvage pathway; IMP from hypoxanthine: step 1/1. Catalyzes a salvage reaction resulting in the formation of IMP that is energically less costly than de novo synthesis. In Methanospirillum hungatei JF-1 (strain ATCC 27890 / DSM 864 / NBRC 100397 / JF-1), this protein is Hypoxanthine/guanine phosphoribosyltransferase.